Here is a 191-residue protein sequence, read N- to C-terminus: Pyridoxal 5'-phosphate synthase subunit PdxT (191 aa).

46–48 provides a ligand contact to L-glutamine; the sequence is GES. Residue Cys-78 is the Nucleophile of the active site. L-glutamine is bound by residues Arg-105 and 133-134; that span reads IR. Residues His-169 and Glu-171 each act as charge relay system in the active site.

The protein belongs to the glutaminase PdxT/SNO family. As to quaternary structure, in the presence of PdxS, forms a dodecamer of heterodimers. Only shows activity in the heterodimer.

The catalysed reaction is aldehydo-D-ribose 5-phosphate + D-glyceraldehyde 3-phosphate + L-glutamine = pyridoxal 5'-phosphate + L-glutamate + phosphate + 3 H2O + H(+). The enzyme catalyses L-glutamine + H2O = L-glutamate + NH4(+). It functions in the pathway cofactor biosynthesis; pyridoxal 5'-phosphate biosynthesis. In terms of biological role, catalyzes the hydrolysis of glutamine to glutamate and ammonia as part of the biosynthesis of pyridoxal 5'-phosphate. The resulting ammonia molecule is channeled to the active site of PdxS. The polypeptide is Pyridoxal 5'-phosphate synthase subunit PdxT (Brevibacillus brevis (strain 47 / JCM 6285 / NBRC 100599)).